The following is a 486-amino-acid chain: Glutamyl-tRNA(Gln) amidotransferase subunit A (486 aa).

Catalysis depends on charge relay system residues lysine 79 and serine 154. Catalysis depends on serine 178, which acts as the Acyl-ester intermediate.

This sequence belongs to the amidase family. GatA subfamily. Heterotrimer of A, B and C subunits.

The catalysed reaction is L-glutamyl-tRNA(Gln) + L-glutamine + ATP + H2O = L-glutaminyl-tRNA(Gln) + L-glutamate + ADP + phosphate + H(+). Functionally, allows the formation of correctly charged Gln-tRNA(Gln) through the transamidation of misacylated Glu-tRNA(Gln) in organisms which lack glutaminyl-tRNA synthetase. The reaction takes place in the presence of glutamine and ATP through an activated gamma-phospho-Glu-tRNA(Gln). This Dehalococcoides mccartyi (strain CBDB1) protein is Glutamyl-tRNA(Gln) amidotransferase subunit A.